We begin with the raw amino-acid sequence, 1129 residues long: Phytochrome A type 4 (1129 aa).

The segment covering 1 to 21 (MSSSRPASSSSSRNRQSSRAR) has biased composition (low complexity). A disordered region spans residues 1-24 (MSSSRPASSSSSRNRQSSRARVLA). A GAF domain is found at 217–402 (SMEVLCNTVV…VFAVHVNREF (186 aa)). Residue C322 participates in phytochromobilin binding. PAS domains follow at residues 618 to 688 (VTSE…LQGK) and 748 to 822 (VEGD…VSLC). The 221-residue stretch at 902 to 1122 (YMRHAINNPL…TFILTAELAS (221 aa)) folds into the Histidine kinase domain.

Belongs to the phytochrome family. In terms of assembly, homodimer. In terms of processing, contains one covalently linked phytochromobilin chromophore.

In terms of biological role, regulatory photoreceptor which exists in two forms that are reversibly interconvertible by light: the Pr form that absorbs maximally in the red region of the spectrum and the Pfr form that absorbs maximally in the far-red region. Photoconversion of Pr to Pfr induces an array of morphogenic responses, whereas reconversion of Pfr to Pr cancels the induction of those responses. Pfr controls the expression of a number of nuclear genes including those encoding the small subunit of ribulose-bisphosphate carboxylase, chlorophyll A/B binding protein, protochlorophyllide reductase, rRNA, etc. It also controls the expression of its own gene(s) in a negative feedback fashion. In Avena sativa (Oat), this protein is Phytochrome A type 4 (PHYA4).